Consider the following 362-residue polypeptide: Alpha-tubulin N-acetyltransferase (362 aa).

The N-acetyltransferase domain occupies 1–177 (MQFGCNVAEA…NNFLMLDASI (177 aa)). Residues 111 to 124 (FYTH…GIGT) and 147 to 156 (SPKLLAFLSK) contribute to the acetyl-CoA site.

This sequence belongs to the acetyltransferase ATAT1 family.

It carries out the reaction L-lysyl-[alpha-tubulin] + acetyl-CoA = N(6)-acetyl-L-lysyl-[alpha-tubulin] + CoA + H(+). Functionally, specifically acetylates 'Lys-40' in alpha-tubulin on the lumenal side of microtubules. Promotes microtubule destabilization and accelerates microtubule dynamics; this activity may be independent of acetylation activity. Acetylates alpha-tubulin with a slow enzymatic rate, due to a catalytic site that is not optimized for acetyl transfer. Enters the microtubule through each end and diffuses quickly throughout the lumen of microtubules. Acetylates only long/old microtubules because of its slow acetylation rate since it does not have time to act on dynamically unstable microtubules before the enzyme is released. The sequence is that of Alpha-tubulin N-acetyltransferase from Giardia intestinalis (strain ATCC 50803 / WB clone C6) (Giardia lamblia).